The following is a 530-amino-acid chain: MKAWGALWIVLGLLLWPEPGAASSLPLLMDSIIQALAELEQKVPVTEASITASAWILSAKNSSTHNSLHQRLLLKAPSHNTTEPDPHSLSPELQALISEVAQHDVQNGREYGVVLAPDGSTVAVKPLLFGLEAGLQAHSVANLPSDCLAIPCDTGDTLANIRATWPGLMDAFPNASSPDVGATLPNDKAKTPTTVDRLLAITLAGDLGLTFLHRSQTWSPPGLGTEGCWDQLTAPRVFTLLDPQASRLTMAFLNGALDGALLGNHLSQIPRPHPPLSHLLREYYGAGVNGDPVFRSNFRRQNGAALTSAPTLAQQVWEALVLLQKLEPEHLQLQNISQEQLAQVATLATKEFTEAFLGCPAIHPRCRWGAAPYRGHPTPLRLPLGFLYVHHTYVPAPPCTTFQSCAADMRSMQRFHQDVRKWDDIGYSFVVGSDGYLYQGRGWHWVGAHTRGYNSRGFGVAFVGNYTGSLPNEAALNTVRDALPSCAIRAGLLRPDYKLLGHRQLVLTHCPGNALFNLLRTWPHFTEVEN.

Residues 1–22 (MKAWGALWIVLGLLLWPEPGAA) form the signal peptide. N61, N80, and N174 each carry an N-linked (GlcNAc...) asparagine glycan. A Phosphoserine modification is found at S219. Residue N335 is glycosylated (N-linked (GlcNAc...) asparagine). An N-acetylmuramoyl-L-alanine amidase domain is found at 386-512 (FLYVHHTYVP…RQLVLTHCPG (127 aa)). Residue H390 participates in Zn(2+) binding. Residues C399 and C405 are joined by a disulfide bond. N-linked (GlcNAc...) asparagine glycosylation occurs at N465. Residues H502 and C510 each coordinate Zn(2+).

This sequence belongs to the N-acetylmuramoyl-L-alanine amidase 2 family. Requires Zn(2+) as cofactor. Strongly expressed in liver and fetal liver.

The protein localises to the secreted. It is found in the membrane. The enzyme catalyses Hydrolyzes the link between N-acetylmuramoyl residues and L-amino acid residues in certain cell-wall glycopeptides.. In terms of biological role, may play a scavenger role by digesting biologically active peptidoglycan (PGN) into biologically inactive fragments. Has no direct bacteriolytic activity. The polypeptide is N-acetylmuramoyl-L-alanine amidase (Pglyrp2) (Mus musculus (Mouse)).